A 36-amino-acid polypeptide reads, in one-letter code: Cecropin-D (36 aa).

K36 bears the Lysine amide mark.

The protein belongs to the cecropin family.

The protein resides in the secreted. Functionally, cecropins have lytic and antibacterial activity against several Gram-positive and Gram-negative bacteria. The sequence is that of Cecropin-D from Antheraea pernyi (Chinese oak silk moth).